We begin with the raw amino-acid sequence, 382 residues long: Threonine synthase (382 aa).

Lysine 93 carries the N6-(pyridoxal phosphate)lysine modification. Pyridoxal 5'-phosphate is bound by residues asparagine 119, glycine 219–asparagine 223, and threonine 347.

This sequence belongs to the threonine synthase family. The cofactor is pyridoxal 5'-phosphate.

The enzyme catalyses O-phospho-L-homoserine + H2O = L-threonine + phosphate. The protein operates within amino-acid biosynthesis; L-threonine biosynthesis; L-threonine from L-aspartate: step 5/5. Its function is as follows. Catalyzes the gamma-elimination of phosphate from L-phosphohomoserine and the beta-addition of water to produce L-threonine. This Synechocystis sp. (strain ATCC 27184 / PCC 6803 / Kazusa) protein is Threonine synthase (thrC).